The primary structure comprises 427 residues: Trigger factor (427 aa).

The region spanning 163 to 248 (GDTVVIDFVG…VHEVKAKEVP (86 aa)) is the PPIase FKBP-type domain.

It belongs to the FKBP-type PPIase family. Tig subfamily.

Its subcellular location is the cytoplasm. The enzyme catalyses [protein]-peptidylproline (omega=180) = [protein]-peptidylproline (omega=0). In terms of biological role, involved in protein export. Acts as a chaperone by maintaining the newly synthesized protein in an open conformation. Functions as a peptidyl-prolyl cis-trans isomerase. This is Trigger factor from Streptococcus equi subsp. zooepidemicus (strain MGCS10565).